The following is a 58-amino-acid chain: Large ribosomal subunit protein uL30 (58 aa).

Belongs to the universal ribosomal protein uL30 family. In terms of assembly, part of the 50S ribosomal subunit.

The chain is Large ribosomal subunit protein uL30 from Phocaeicola vulgatus (strain ATCC 8482 / DSM 1447 / JCM 5826 / CCUG 4940 / NBRC 14291 / NCTC 11154) (Bacteroides vulgatus).